A 341-amino-acid polypeptide reads, in one-letter code: MVPAAGALLWVLLLNLGPRAAGAQGLTQTPTEMQRVSLRFGGPMTRSYRSTARTGLPRKTRIILEDENDAMADADRLAGPAAAELLAATVSTGFSRSSAINEEDGSSEEGVVINAGKDSTSRELPSATPNTAGSSSTRFIANSQEPEIRLTSSLPRSPGRSTEDLPGSQATLSQWSTPGSTPSRWPSPSPTAMPSPEDLRLVLMPWGPWHCHCKSGTMSRSRSGKLHGLSGRLRVGALSQLRTEHKPCTYQQCPCNRLREECPLDTSLCTDTNCASQSTTSTRTTTTPFPTIHLRSSPSLPPASPCPALAFWKRVRIGLEDIWNSLSSVFTEMQPIDRNQR.

The signal sequence occupies residues 1 to 23 (MVPAAGALLWVLLLNLGPRAAGA). The interval 115–196 (AGKDSTSREL…SPSPTAMPSP (82 aa)) is disordered. Positions 127-155 (ATPNTAGSSSTRFIANSQEPEIRLTSSLP) are enriched in polar residues.

Post-translationally, phosphorylation sites are present in the extracellular medium. In terms of tissue distribution, plasma. Overexpressed in lymphomas.

The protein resides in the secreted. Functionally, involved in control of cellular proliferation. Onconcogenic modifier contributing to the tumor suppressor function of DNMT3B. The chain is Protein MENT (MENT) from Homo sapiens (Human).